We begin with the raw amino-acid sequence, 290 residues long: Probable transcriptional regulatory protein HAH1 (290 aa).

This sequence belongs to the TACO1 family.

The protein localises to the mitochondrion. The polypeptide is Probable transcriptional regulatory protein HAH1 (Saccharomyces cerevisiae (strain ATCC 204508 / S288c) (Baker's yeast)).